The primary structure comprises 198 residues: Small ribosomal subunit protein uS4 (198 aa).

The region spanning 88 to 153 (LRLDNVMFRM…AQRYKDILEV (66 aa)) is the S4 RNA-binding domain.

Belongs to the universal ribosomal protein uS4 family. Part of the 30S ribosomal subunit. Contacts protein S5. The interaction surface between S4 and S5 is involved in control of translational fidelity.

Functionally, one of the primary rRNA binding proteins, it binds directly to 16S rRNA where it nucleates assembly of the body of the 30S subunit. With S5 and S12 plays an important role in translational accuracy. The sequence is that of Small ribosomal subunit protein uS4 from Lachnoclostridium phytofermentans (strain ATCC 700394 / DSM 18823 / ISDg) (Clostridium phytofermentans).